Consider the following 189-residue polypeptide: Peptidyl-tRNA hydrolase (189 aa).

Residue Tyr16 coordinates tRNA. His21 functions as the Proton acceptor in the catalytic mechanism. Phe67, Asn69, and Asn115 together coordinate tRNA.

It belongs to the PTH family. As to quaternary structure, monomer.

The protein localises to the cytoplasm. It catalyses the reaction an N-acyl-L-alpha-aminoacyl-tRNA + H2O = an N-acyl-L-amino acid + a tRNA + H(+). Hydrolyzes ribosome-free peptidyl-tRNAs (with 1 or more amino acids incorporated), which drop off the ribosome during protein synthesis, or as a result of ribosome stalling. Its function is as follows. Catalyzes the release of premature peptidyl moieties from peptidyl-tRNA molecules trapped in stalled 50S ribosomal subunits, and thus maintains levels of free tRNAs and 50S ribosomes. This chain is Peptidyl-tRNA hydrolase, found in Legionella pneumophila (strain Paris).